We begin with the raw amino-acid sequence, 153 residues long: Small ribosomal subunit protein uS13 (153 aa).

It belongs to the universal ribosomal protein uS13 family. In terms of assembly, part of the 30S ribosomal subunit. Forms a loose heterodimer with protein S19. Forms two bridges to the 50S subunit in the 70S ribosome.

Its function is as follows. Located at the top of the head of the 30S subunit, it contacts several helices of the 16S rRNA. In the 70S ribosome it contacts the 23S rRNA (bridge B1a) and protein L5 of the 50S subunit (bridge B1b), connecting the 2 subunits; these bridges are implicated in subunit movement. This Pyrobaculum calidifontis (strain DSM 21063 / JCM 11548 / VA1) protein is Small ribosomal subunit protein uS13.